Consider the following 488-residue polypeptide: Protein nucleotidyltransferase YdiU (488 aa).

ATP is bound by residues G91, G93, R94, K114, D126, G127, R177, and R184. D253 functions as the Proton acceptor in the catalytic mechanism. Residues N254 and D263 each coordinate Mg(2+). Position 263 (D263) interacts with ATP.

Belongs to the SELO family. Mg(2+) is required as a cofactor. Requires Mn(2+) as cofactor.

It catalyses the reaction L-seryl-[protein] + ATP = 3-O-(5'-adenylyl)-L-seryl-[protein] + diphosphate. It carries out the reaction L-threonyl-[protein] + ATP = 3-O-(5'-adenylyl)-L-threonyl-[protein] + diphosphate. The catalysed reaction is L-tyrosyl-[protein] + ATP = O-(5'-adenylyl)-L-tyrosyl-[protein] + diphosphate. The enzyme catalyses L-histidyl-[protein] + UTP = N(tele)-(5'-uridylyl)-L-histidyl-[protein] + diphosphate. It catalyses the reaction L-seryl-[protein] + UTP = O-(5'-uridylyl)-L-seryl-[protein] + diphosphate. It carries out the reaction L-tyrosyl-[protein] + UTP = O-(5'-uridylyl)-L-tyrosyl-[protein] + diphosphate. Functionally, nucleotidyltransferase involved in the post-translational modification of proteins. It can catalyze the addition of adenosine monophosphate (AMP) or uridine monophosphate (UMP) to a protein, resulting in modifications known as AMPylation and UMPylation. This is Protein nucleotidyltransferase YdiU from Bacillus thuringiensis subsp. konkukian (strain 97-27).